The following is a 461-amino-acid chain: Serine carboxypeptidase-like 51 (461 aa).

The first 20 residues, 1–20 (MKTTVVYLVILCLIVSCTNG), serve as a signal peptide directing secretion. N99 and N152 each carry an N-linked (GlcNAc...) asparagine glycan. Residue S166 is part of the active site. Residue N340 is glycosylated (N-linked (GlcNAc...) asparagine). Catalysis depends on residues D379 and H438.

The protein belongs to the peptidase S10 family. In terms of tissue distribution, expressed in seedlings, roots, flowers and siliques.

Its subcellular location is the secreted. In terms of biological role, probable carboxypeptidase. This chain is Serine carboxypeptidase-like 51 (SCPL51), found in Arabidopsis thaliana (Mouse-ear cress).